We begin with the raw amino-acid sequence, 228 residues long: Geranylgeranylglyceryl phosphate synthase (228 aa).

Residue Lys-11 coordinates sn-glycerol 1-phosphate. The Mg(2+) site is built by Asp-13 and Thr-39. Sn-glycerol 1-phosphate contacts are provided by residues 159–164 (YIEYSG), Gly-189, and 209–210 (GN).

It belongs to the GGGP/HepGP synthase family. Group I subfamily. Mg(2+) is required as a cofactor.

Its subcellular location is the cytoplasm. The enzyme catalyses sn-glycerol 1-phosphate + (2E,6E,10E)-geranylgeranyl diphosphate = sn-3-O-(geranylgeranyl)glycerol 1-phosphate + diphosphate. The protein operates within membrane lipid metabolism; glycerophospholipid metabolism. In terms of biological role, prenyltransferase that catalyzes the transfer of the geranylgeranyl moiety of geranylgeranyl diphosphate (GGPP) to the C3 hydroxyl of sn-glycerol-1-phosphate (G1P). This reaction is the first ether-bond-formation step in the biosynthesis of archaeal membrane lipids. The sequence is that of Geranylgeranylglyceryl phosphate synthase from Methanoregula boonei (strain DSM 21154 / JCM 14090 / 6A8).